A 189-amino-acid polypeptide reads, in one-letter code: MDTEYEQVNKPWNELYKETTLGNKLTVNVGMEDQEVPLLPSNFLTKVRVGLSGGYITMRRIRIKIIPLVSRKAGVSGKLYLRDISDTTGRKLHCTESLDLGREIRLTMQHLDFSVSTRSDVPIVFGFEELVSPFLEGRELFSISVRWQFGLSKNCYSLPQSKWKVMYQEDALKVLKPSKKKASKTDSSV.

The protein belongs to the tombusvirus/aureusvirus movement protein p22 family. Interacts with host protein HFI22. Phosphorylated.

It is found in the host membrane. In terms of biological role, transports viral genome to neighboring plant cells directly through plasmosdesmata, without any budding. The movement protein allows efficient cell to cell propagation, by bypassing the host cell wall barrier. The polypeptide is Movement protein (Capsicum annuum (Capsicum pepper)).